We begin with the raw amino-acid sequence, 240 residues long: 1-(5-phosphoribosyl)-5-[(5-phosphoribosylamino)methylideneamino] imidazole-4-carboxamide isomerase (240 aa).

The active-site Proton acceptor is Asp-8. Asp-130 acts as the Proton donor in catalysis.

It belongs to the HisA/HisF family.

The protein localises to the cytoplasm. The enzyme catalyses 1-(5-phospho-beta-D-ribosyl)-5-[(5-phospho-beta-D-ribosylamino)methylideneamino]imidazole-4-carboxamide = 5-[(5-phospho-1-deoxy-D-ribulos-1-ylimino)methylamino]-1-(5-phospho-beta-D-ribosyl)imidazole-4-carboxamide. It functions in the pathway amino-acid biosynthesis; L-histidine biosynthesis; L-histidine from 5-phospho-alpha-D-ribose 1-diphosphate: step 4/9. This chain is 1-(5-phosphoribosyl)-5-[(5-phosphoribosylamino)methylideneamino] imidazole-4-carboxamide isomerase, found in Flavobacterium johnsoniae (strain ATCC 17061 / DSM 2064 / JCM 8514 / BCRC 14874 / CCUG 350202 / NBRC 14942 / NCIMB 11054 / UW101) (Cytophaga johnsonae).